The primary structure comprises 141 residues: Transcription antitermination protein NusB (141 aa).

It belongs to the NusB family.

Its function is as follows. Involved in transcription antitermination. Required for transcription of ribosomal RNA (rRNA) genes. Binds specifically to the boxA antiterminator sequence of the ribosomal RNA (rrn) operons. The polypeptide is Transcription antitermination protein NusB (Clostridium botulinum (strain Loch Maree / Type A3)).